A 249-amino-acid polypeptide reads, in one-letter code: MIT domain-containing protein 1 (249 aa).

The MIT domain occupies 8-86; sequence QDSDSTAAVA…KYLDQEKEDG (79 aa). The segment at 168–231 is important for association with membranes; sequence SGLEEIKQSL…SLGYYDLDLR (64 aa).

In terms of assembly, homodimer. Interacts (via MIT domain) with CHMP1A, CHMP1B, CHMP2A and IST1.

The protein localises to the late endosome membrane. The protein resides in the midbody. Its subcellular location is the membrane. In terms of biological role, required for efficient abscission at the end of cytokinesis, together with components of the ESCRT-III complex. The sequence is that of MIT domain-containing protein 1 (Mitd1) from Mus musculus (Mouse).